The sequence spans 637 residues: tRNA 5-methylaminomethyl-2-thiouridine biosynthesis bifunctional protein MnmC (637 aa).

The tract at residues 1 to 20 is disordered; it reads MSERIEWLEDGTAGGSPYSP. Residues 1-232 are tRNA (mnm(5)s(2)U34)-methyltransferase; the sequence is MSERIEWLED…KRDNLQGEYQ (232 aa). An FAD-dependent cmnm(5)s(2)U34 oxidoreductase region spans residues 255–637; it reads IGAGLAGSAV…YATRLQPSGS (383 aa).

This sequence in the N-terminal section; belongs to the methyltransferase superfamily. tRNA (mnm(5)s(2)U34)-methyltransferase family. It in the C-terminal section; belongs to the DAO family. It depends on FAD as a cofactor.

Its subcellular location is the cytoplasm. The enzyme catalyses 5-aminomethyl-2-thiouridine(34) in tRNA + S-adenosyl-L-methionine = 5-methylaminomethyl-2-thiouridine(34) in tRNA + S-adenosyl-L-homocysteine + H(+). Its function is as follows. Catalyzes the last two steps in the biosynthesis of 5-methylaminomethyl-2-thiouridine (mnm(5)s(2)U) at the wobble position (U34) in tRNA. Catalyzes the FAD-dependent demodification of cmnm(5)s(2)U34 to nm(5)s(2)U34, followed by the transfer of a methyl group from S-adenosyl-L-methionine to nm(5)s(2)U34, to form mnm(5)s(2)U34. This Polaromonas naphthalenivorans (strain CJ2) protein is tRNA 5-methylaminomethyl-2-thiouridine biosynthesis bifunctional protein MnmC.